We begin with the raw amino-acid sequence, 397 residues long: MPITERWLLPEGVGELLPIEAEQMERARRVLIDLFHSWGYDLVVPPLIEYLESLLTGVGTDLELQTFKLTDQLTGRLMGVRADITPQVARIAAHCIQRKGVTRLCYIGSVLHTLSQGLGGTRNPIQVGAELYGHSGTESDLEVLRLALEALDVVGVKQVHLDLGHVGIFRDLVLQANLSPEEEYGLFNILQRKARDEIDTMLRNRDVGPQLRHMFMALTSLNGGREVLDEAEQVLAGSGVEQALTTLKEVATLTDKYLPRVPMHFDLGELRGYRYHTGLVFAAYIPGRGQAVAQGGRYDDIGQVFGRAQPATGFSMDLKELVTLGSSTTTTRLGIFAPWSEAPGFEREVARLRQQGERVVYGFPDTVSNYDELGCDRELVLKAKQWQIIEIRKLGRG.

This sequence belongs to the class-II aminoacyl-tRNA synthetase family. HisZ subfamily. Heteromultimer composed of HisG and HisZ subunits.

The protein localises to the cytoplasm. It participates in amino-acid biosynthesis; L-histidine biosynthesis; L-histidine from 5-phospho-alpha-D-ribose 1-diphosphate: step 1/9. In terms of biological role, required for the first step of histidine biosynthesis. May allow the feedback regulation of ATP phosphoribosyltransferase activity by histidine. This chain is ATP phosphoribosyltransferase regulatory subunit, found in Nitrosococcus oceani (strain ATCC 19707 / BCRC 17464 / JCM 30415 / NCIMB 11848 / C-107).